Here is a 357-residue protein sequence, read N- to C-terminus: Fructose-bisphosphate aldolase, cytoplasmic isozyme 1 (357 aa).

2 residues coordinate substrate: arginine 52 and lysine 142. Residue glutamate 183 is the Proton acceptor of the active site. Lysine 225 serves as the catalytic Schiff-base intermediate with dihydroxyacetone-P.

Belongs to the class I fructose-bisphosphate aldolase family.

Its subcellular location is the cytoplasm. It catalyses the reaction beta-D-fructose 1,6-bisphosphate = D-glyceraldehyde 3-phosphate + dihydroxyacetone phosphate. Its pathway is carbohydrate degradation; glycolysis; D-glyceraldehyde 3-phosphate and glycerone phosphate from D-glucose: step 4/4. In Pisum sativum (Garden pea), this protein is Fructose-bisphosphate aldolase, cytoplasmic isozyme 1.